The sequence spans 377 residues: Chaperone protein DnaJ (377 aa).

The J domain occupies 5-69; that stretch reads EYYDRLGVSK…QKRAAYDQYG (65 aa). Residues 133–215 form a CR-type zinc finger; that stretch reads GTEKEVHYNR…CHGTGHEKQS (83 aa). 8 residues coordinate Zn(2+): Cys146, Cys149, Cys163, Cys166, Cys189, Cys192, Cys203, and Cys206. CXXCXGXG motif repeat units lie at residues 146 to 153, 163 to 170, 189 to 196, and 203 to 210; these read CHTCNGSG, CSKCHGSG, CDVCHGTG, and CPTCHGTG.

The protein belongs to the DnaJ family. As to quaternary structure, homodimer. It depends on Zn(2+) as a cofactor.

The protein resides in the cytoplasm. Its function is as follows. Participates actively in the response to hyperosmotic and heat shock by preventing the aggregation of stress-denatured proteins and by disaggregating proteins, also in an autonomous, DnaK-independent fashion. Unfolded proteins bind initially to DnaJ; upon interaction with the DnaJ-bound protein, DnaK hydrolyzes its bound ATP, resulting in the formation of a stable complex. GrpE releases ADP from DnaK; ATP binding to DnaK triggers the release of the substrate protein, thus completing the reaction cycle. Several rounds of ATP-dependent interactions between DnaJ, DnaK and GrpE are required for fully efficient folding. Also involved, together with DnaK and GrpE, in the DNA replication of plasmids through activation of initiation proteins. The sequence is that of Chaperone protein DnaJ from Streptococcus mutans serotype c (strain ATCC 700610 / UA159).